A 29-amino-acid chain; its full sequence is Cytochrome b6-f complex subunit 8 (29 aa).

The chain crosses the membrane as a helical span at residues 3–23; sequence IVSLAWASLMVVFTFSLSLVV.

This sequence belongs to the PetN family. As to quaternary structure, the 4 large subunits of the cytochrome b6-f complex are cytochrome b6, subunit IV (17 kDa polypeptide, PetD), cytochrome f and the Rieske protein, while the 4 small subunits are PetG, PetL, PetM and PetN. The complex functions as a dimer.

It is found in the plastid. Its subcellular location is the chloroplast thylakoid membrane. Functionally, component of the cytochrome b6-f complex, which mediates electron transfer between photosystem II (PSII) and photosystem I (PSI), cyclic electron flow around PSI, and state transitions. The sequence is that of Cytochrome b6-f complex subunit 8 from Coffea arabica (Arabian coffee).